A 464-amino-acid chain; its full sequence is ATP synthase subunit beta (464 aa).

Position 150–157 (150–157 (GGAGVGKT)) interacts with ATP.

The protein belongs to the ATPase alpha/beta chains family. In terms of assembly, F-type ATPases have 2 components, CF(1) - the catalytic core - and CF(0) - the membrane proton channel. CF(1) has five subunits: alpha(3), beta(3), gamma(1), delta(1), epsilon(1). CF(0) has three main subunits: a(1), b(2) and c(9-12). The alpha and beta chains form an alternating ring which encloses part of the gamma chain. CF(1) is attached to CF(0) by a central stalk formed by the gamma and epsilon chains, while a peripheral stalk is formed by the delta and b chains.

The protein localises to the cell membrane. It carries out the reaction ATP + H2O + 4 H(+)(in) = ADP + phosphate + 5 H(+)(out). Its function is as follows. Produces ATP from ADP in the presence of a proton gradient across the membrane. The catalytic sites are hosted primarily by the beta subunits. In Dehalococcoides mccartyi (strain ATCC BAA-2266 / KCTC 15142 / 195) (Dehalococcoides ethenogenes (strain 195)), this protein is ATP synthase subunit beta.